Reading from the N-terminus, the 2605-residue chain is Protein ABERRANT POLLEN TRANSMISSION 1 (2605 aa).

Residues 1 to 43 form the signal peptide; the sequence is MMLGLVQLLVGFVVAWEAVELVLRHGLLLSVFKLAILAALAAA. The segment at 137 to 158 is disordered; it reads STNKKKPAPRKPISTTTAKAKG. N-linked (GlcNAc...) asparagine glycosylation is found at Asn232, Asn320, Asn348, Asn516, Asn587, Asn628, Asn696, Asn779, Asn1171, Asn1318, and Asn1459. The tract at residues 305–326 is disordered; the sequence is SASTVAEQKDEPSVDNKSAARS. Residues 311–326 are compositionally biased toward basic and acidic residues; the sequence is EQKDEPSVDNKSAARS. A disordered region spans residues 1761–1818; the sequence is MSKDGALSSVSSTSQPSEPQQIKSSESPPSNGSGKPDLTSSSENALKRSNNSDSEEEG. Positions 1768 to 1781 are enriched in low complexity; it reads SSVSSTSQPSEPQQ. A compositionally biased stretch (polar residues) spans 1782–1812; that stretch reads IKSSESPPSNGSGKPDLTSSSENALKRSNNS. N-linked (GlcNAc...) asparagine glycans are attached at residues Asn1791, Asn1810, Asn2003, Asn2280, and Asn2291. 2 disordered regions span residues 2269–2312 and 2332–2361; these read VSTT…SSFD and EGQT…REDK. The span at 2281–2300 shows a compositional bias: polar residues; sequence TSVAETNSPNNQSSKETTFA. Basic and acidic residues-rich tracts occupy residues 2303–2312 and 2343–2361; these read PELRRTSSFD and DAAK…REDK. 2 N-linked (GlcNAc...) asparagine glycosylation sites follow: Asn2468 and Asn2564. The segment at 2574 to 2605 is disordered; it reads TELEVAELPPRAPGYNTDSSSDSSSAETSPKD.

This sequence belongs to the SABRE family. As to expression, mature pollen-specific.

Its subcellular location is the secreted. It localises to the golgi apparatus. Functionally, may be involved in membrane trafficking. Required for tip growth in pollen tubes and root hairs. The chain is Protein ABERRANT POLLEN TRANSMISSION 1 from Zea mays (Maize).